The sequence spans 220 residues: Fibroblast growth factor 3 (220 aa).

Positions Met-1–Ala-19 are cleaved as a signal peptide. A disordered region spans residues Ala-19–Leu-40. Asn-66 is a glycosylation site (N-linked (GlcNAc...) asparagine).

It belongs to the heparin-binding growth factors family.

It is found in the secreted. Functionally, plays an important role in the regulation of embryonic development, cell proliferation, and cell differentiation. This chain is Fibroblast growth factor 3 (FGF3), found in Gallus gallus (Chicken).